A 470-amino-acid polypeptide reads, in one-letter code: 3-isopropylmalate dehydratase large subunit (470 aa).

The [4Fe-4S] cluster site is built by Cys349, Cys409, and Cys412.

The protein belongs to the aconitase/IPM isomerase family. LeuC type 1 subfamily. In terms of assembly, heterodimer of LeuC and LeuD. [4Fe-4S] cluster is required as a cofactor.

It catalyses the reaction (2R,3S)-3-isopropylmalate = (2S)-2-isopropylmalate. It participates in amino-acid biosynthesis; L-leucine biosynthesis; L-leucine from 3-methyl-2-oxobutanoate: step 2/4. Catalyzes the isomerization between 2-isopropylmalate and 3-isopropylmalate, via the formation of 2-isopropylmaleate. The chain is 3-isopropylmalate dehydratase large subunit from Campylobacter jejuni subsp. jejuni serotype O:2 (strain ATCC 700819 / NCTC 11168).